Consider the following 582-residue polypeptide: TRAF-type zinc finger domain-containing protein 1 (582 aa).

An N-acetylalanine modification is found at A2. The segment at 27–103 (IHEIHCQRNI…DLELSILKLK (77 aa)) adopts a TRAF-type zinc-finger fold. S191 is modified (phosphoserine). Positions 216–238 (EEQERQERNRGQQPPKEGGEDGA) are disordered. 8 positions are modified to phosphoserine: S278, S320, S326, S327, S409, S415, S430, and S470. Disordered regions lie at residues 402–509 (EGIP…IAPG) and 522–582 (PENI…EEEE). Polar residues-rich tracts occupy residues 454–471 (PFNNMTATYNQLSRSTSG) and 486–504 (LNNSDSQDIQGRNQNSQNG).

Interacts with MAVS, TICAM1, TRAF1, TRAF2, TRAF3 and TRAF6.

Functionally, negative feedback regulator that controls excessive innate immune responses. Regulates both Toll-like receptor 4 (TLR4) and DDX58/RIG1-like helicases (RLH) pathways. May inhibit the LTR pathway by direct interaction with TRAF6 and attenuation of NF-kappa-B activation. May negatively regulate the RLH pathway downstream from MAVS and upstream of NF-kappa-B and IRF3. This Macaca fascicularis (Crab-eating macaque) protein is TRAF-type zinc finger domain-containing protein 1 (TRAFD1).